A 181-amino-acid chain; its full sequence is Endoribonuclease YbeY (181 aa).

Residues H115, H119, and H125 each coordinate Zn(2+).

This sequence belongs to the endoribonuclease YbeY family. Zn(2+) serves as cofactor.

The protein localises to the cytoplasm. Single strand-specific metallo-endoribonuclease involved in late-stage 70S ribosome quality control and in maturation of the 3' terminus of the 16S rRNA. This chain is Endoribonuclease YbeY, found in Bifidobacterium adolescentis (strain ATCC 15703 / DSM 20083 / NCTC 11814 / E194a).